Reading from the N-terminus, the 308-residue chain is MARAGESGRAGVRRSTAPSRRTGGARAAADAVRAELRRRLEPSLTTAGFDLEDVSVTRAGARSVVRVVVDRDGGIDLDAVADASRLVSAVLDGEDIGTDGAGGTGGSGGAAGGSGASPISGAYVLEVTSPGVDRPLVEPRHWRRAVGRLVVVRRADGVEVEGRVLSADDEGADLAVPTAPARRGRPVRRRIERVVYATVARAAVQVEFGSATDADGDTDVDADAGAELPAGAELPAGADLGLGAESDVDLDEGLEDDDGLEDEDDEDEYGAAGGGAPAGSAADEVVEDHGAVDTEAGLIGRTGKEMNR.

Disordered regions lie at residues 1-31 (MARA…AADA), 94-113 (EDIG…AAGG), and 249-308 (DLDE…EMNR). A compositionally biased stretch (low complexity) spans 17–31 (APSRRTGGARAAADA). Residues 99–113 (DGAGGTGGSGGAAGG) show a composition bias toward gly residues. Over residues 249–269 (DLDEGLEDDDGLEDEDDEDEY) the composition is skewed to acidic residues.

It belongs to the RimP family.

Its subcellular location is the cytoplasm. In terms of biological role, required for maturation of 30S ribosomal subunits. The chain is Ribosome maturation factor RimP from Parafrankia sp. (strain EAN1pec).